The sequence spans 279 residues: 3-methyl-2-oxobutanoate hydroxymethyltransferase (279 aa).

Positions 43 and 82 each coordinate Mg(2+). 3-methyl-2-oxobutanoate-binding positions include 43-44 (DS), Asp-82, and Lys-112. Glu-114 provides a ligand contact to Mg(2+). Glu-181 (proton acceptor) is an active-site residue.

The protein belongs to the PanB family. As to quaternary structure, homodecamer; pentamer of dimers. Mg(2+) serves as cofactor.

The protein localises to the cytoplasm. The catalysed reaction is 3-methyl-2-oxobutanoate + (6R)-5,10-methylene-5,6,7,8-tetrahydrofolate + H2O = 2-dehydropantoate + (6S)-5,6,7,8-tetrahydrofolate. The protein operates within cofactor biosynthesis; (R)-pantothenate biosynthesis; (R)-pantoate from 3-methyl-2-oxobutanoate: step 1/2. Catalyzes the reversible reaction in which hydroxymethyl group from 5,10-methylenetetrahydrofolate is transferred onto alpha-ketoisovalerate to form ketopantoate. The sequence is that of 3-methyl-2-oxobutanoate hydroxymethyltransferase from Lysinibacillus sphaericus (strain C3-41).